A 714-amino-acid polypeptide reads, in one-letter code: Fatty acid oxidation complex subunit alpha (714 aa).

An enoyl-CoA hydratase region spans residues 1 to 190 (MEMTSAFTLN…KLGLVDDVVP (190 aa)). The tract at residues 306-714 (APLNSVGILG…FWKTTATDLQ (409 aa)) is 3-hydroxyacyl-CoA dehydrogenase.

In the N-terminal section; belongs to the enoyl-CoA hydratase/isomerase family. This sequence in the central section; belongs to the 3-hydroxyacyl-CoA dehydrogenase family. As to quaternary structure, heterotetramer of two alpha chains (FadJ) and two beta chains (FadI).

The protein resides in the cytoplasm. It carries out the reaction a (3S)-3-hydroxyacyl-CoA = a (2E)-enoyl-CoA + H2O. The enzyme catalyses a 4-saturated-(3S)-3-hydroxyacyl-CoA = a (3E)-enoyl-CoA + H2O. It catalyses the reaction a (3S)-3-hydroxyacyl-CoA + NAD(+) = a 3-oxoacyl-CoA + NADH + H(+). The catalysed reaction is (3S)-3-hydroxybutanoyl-CoA = (3R)-3-hydroxybutanoyl-CoA. It participates in lipid metabolism; fatty acid beta-oxidation. In terms of biological role, catalyzes the formation of a hydroxyacyl-CoA by addition of water on enoyl-CoA. Also exhibits 3-hydroxyacyl-CoA epimerase and 3-hydroxyacyl-CoA dehydrogenase activities. Strongly involved in the anaerobic degradation of long and medium-chain fatty acids in the presence of nitrate and weakly involved in the aerobic degradation of long-chain fatty acids. The chain is Fatty acid oxidation complex subunit alpha (fadJ) from Escherichia coli (strain K12).